We begin with the raw amino-acid sequence, 542 residues long: Chaperonin GroEL 3 (542 aa).

ATP-binding positions include 30–33 (TLGP), lysine 51, 87–91 (DGTTT), glycine 415, and aspartate 496.

Belongs to the chaperonin (HSP60) family. In terms of assembly, forms a cylinder of 14 subunits composed of two heptameric rings stacked back-to-back. Interacts with the co-chaperonin GroES.

The protein localises to the cytoplasm. The catalysed reaction is ATP + H2O + a folded polypeptide = ADP + phosphate + an unfolded polypeptide.. Together with its co-chaperonin GroES, plays an essential role in assisting protein folding. The GroEL-GroES system forms a nano-cage that allows encapsulation of the non-native substrate proteins and provides a physical environment optimized to promote and accelerate protein folding. This Rhizobium johnstonii (strain DSM 114642 / LMG 32736 / 3841) (Rhizobium leguminosarum bv. viciae) protein is Chaperonin GroEL 3.